Consider the following 353-residue polypeptide: Transcription factor MafA (353 aa).

Phosphoserine is present on S14. K32 participates in a covalent cross-link: Glycyl lysine isopeptide (Lys-Gly) (interchain with G-Cter in SUMO2). Disordered regions lie at residues 40–108 (RFCH…GGTS) and 177–219 (ADDM…GAGH). Residues 46 to 73 (PPGSLSSTPLSTPCSSVPSSPSFCAPSP) are compositionally biased toward low complexity. S49 bears the Phosphoserine mark. A phosphothreonine mark is found at T53 and T57. A phosphoserine mark is found at S61 and S65. Residues 74 to 93 (GTGGGGGAGGGGGSSQAGGA) are compositionally biased toward gly residues. The span at 183–210 (GHHHGAHHAAHHHHAAHHHHHHHHHHGG) shows a compositional bias: basic residues. The interval 254-279 (RLKQKRRTLKNRGYAQSCRFKRVQQR) is basic motif. Residues 254-317 (RLKQKRRTLK…DLYKEKYEKL (64 aa)) form the bZIP domain. The interval 282–303 (LESEKCQLQSQVEQLKLEVGRL) is leucine-zipper. The interval 315-353 (EKLAGRGGPGSAGGAGFPREPSPPQAGPGGAKGTADFFL) is disordered. Gly residues predominate over residues 319 to 330 (GRGGPGSAGGAG).

It belongs to the bZIP family. Maf subfamily. In terms of assembly, forms homodimers or heterodimers. Monomers and dimers are able to bind DNA, but the off-rate is faster for monomers. Interacts with NEUROD1 and PDX1. May interact with MAFB, FOS, JUN and PCAF. In terms of processing, ubiquitinated, leading to its degradation by the proteasome. Phosphorylated at tyrosines. Expressed in the islets of Langerhans (at protein level).

It is found in the nucleus. Transcription factor that activates insulin gene expression. Acts synergistically with NEUROD1/BETA2 and PDX1. Binds the insulin enhancer C1/RIPE3b element. Binds to consensus TRE-type MARE 5'-TGCTGACTCAGCA-3' DNA sequence. The sequence is that of Transcription factor MafA (MAFA) from Homo sapiens (Human).